We begin with the raw amino-acid sequence, 95 residues long: Protein TRACHEARY ELEMENT DIFFERENTIATION-RELATED 6 (95 aa).

Residues 1–3 lie on the Extracellular side of the membrane; it reads MAT. A helical membrane pass occupies residues 4-24; the sequence is IFIVFVSFGCVFVLGIAAFVL. Topologically, residues 25 to 95 are cytoplasmic; that stretch reads CCLIKKWKCS…KLGTASTSKA (71 aa).

In terms of assembly, interacts with the secondary cell wall (SCW)-related cellulose synthase complex. Accumulates in cells differentiating into tracheary element (TE) which undergo secondary cell wall (SCW) formation.

The protein resides in the cell membrane. It is found in the secreted. Its subcellular location is the cell wall. Its function is as follows. Involved in the secondary cell wall (SCW) formation of vessel elements (e.g. protoxylem and metaxylem), thus promoting tracheary element (TE) differentiation. This chain is Protein TRACHEARY ELEMENT DIFFERENTIATION-RELATED 6, found in Zinnia elegans (Garden zinnia).